A 573-amino-acid polypeptide reads, in one-letter code: Sulfate adenylyltransferase (573 aa).

The tract at residues Met-1–Tyr-169 is N-terminal. Residues Asp-170–Gln-394 form a catalytic region. Residue Gln-197 participates in sulfate binding. ATP-binding positions include Gln-197–Asn-200 and Gly-291–His-294. Catalysis depends on residues Thr-198, Arg-199, and Asn-200. Arg-199 provides a ligand contact to sulfate. Position 295 (Ala-295) interacts with sulfate. Met-333 is an ATP binding site. Positions Gln-395–Phe-573 are allosteric regulation domain; adenylyl-sulfate kinase-like. Residues Glu-434–Arg-437, Arg-451, Ile-477–Ala-478, and Arg-515 each bind 3'-phosphoadenylyl sulfate.

This sequence in the N-terminal section; belongs to the sulfate adenylyltransferase family. The protein in the C-terminal section; belongs to the APS kinase family. Homohexamer. Dimer of trimers.

The protein localises to the cytoplasm. It catalyses the reaction sulfate + ATP + H(+) = adenosine 5'-phosphosulfate + diphosphate. It functions in the pathway sulfur metabolism; hydrogen sulfide biosynthesis; sulfite from sulfate: step 1/3. Allosterically inhibited by 3'-phosphoadenosine 5'-phosphosulfate (PAPS). Catalyzes the first intracellular reaction of sulfate assimilation, forming adenosine-5'-phosphosulfate (APS) from inorganic sulfate and ATP. Plays an important role in sulfate activation as a component of the biosynthesis pathway of sulfur-containing amino acids. The sequence is that of Sulfate adenylyltransferase from Chaetomium globosum (strain ATCC 6205 / CBS 148.51 / DSM 1962 / NBRC 6347 / NRRL 1970) (Soil fungus).